The primary structure comprises 410 residues: Ribosomal RNA large subunit methyltransferase G (410 aa).

This sequence belongs to the methyltransferase superfamily. RlmG family.

The protein resides in the cytoplasm. It carries out the reaction guanosine(1835) in 23S rRNA + S-adenosyl-L-methionine = N(2)-methylguanosine(1835) in 23S rRNA + S-adenosyl-L-homocysteine + H(+). In terms of biological role, specifically methylates the guanine in position 1835 (m2G1835) of 23S rRNA. The chain is Ribosomal RNA large subunit methyltransferase G from Alteromonas mediterranea (strain DSM 17117 / CIP 110805 / LMG 28347 / Deep ecotype).